Consider the following 646-residue polypeptide: 1-deoxy-D-xylulose-5-phosphate synthase (646 aa).

Residues His-86 and 127–129 contribute to the thiamine diphosphate site; that span reads AHS. Asp-158 lines the Mg(2+) pocket. Thiamine diphosphate contacts are provided by residues 159-160, Asn-188, Tyr-295, and Glu-377; that span reads GA. Asn-188 serves as a coordination point for Mg(2+).

It belongs to the transketolase family. DXPS subfamily. In terms of assembly, homodimer. Mg(2+) serves as cofactor. It depends on thiamine diphosphate as a cofactor.

The enzyme catalyses D-glyceraldehyde 3-phosphate + pyruvate + H(+) = 1-deoxy-D-xylulose 5-phosphate + CO2. It functions in the pathway metabolic intermediate biosynthesis; 1-deoxy-D-xylulose 5-phosphate biosynthesis; 1-deoxy-D-xylulose 5-phosphate from D-glyceraldehyde 3-phosphate and pyruvate: step 1/1. Functionally, catalyzes the acyloin condensation reaction between C atoms 2 and 3 of pyruvate and glyceraldehyde 3-phosphate to yield 1-deoxy-D-xylulose-5-phosphate (DXP). The protein is 1-deoxy-D-xylulose-5-phosphate synthase of Burkholderia cenocepacia (strain HI2424).